A 127-amino-acid polypeptide reads, in one-letter code: Protein ApaG (127 aa).

Positions 3–127 (NERKYSIKVE…FILSVPRVLH (125 aa)) constitute an ApaG domain.

In Nitrosomonas europaea (strain ATCC 19718 / CIP 103999 / KCTC 2705 / NBRC 14298), this protein is Protein ApaG.